A 216-amino-acid polypeptide reads, in one-letter code: Homologous-pairing protein 2 (216 aa).

It belongs to the HOP2 family. In terms of assembly, interacts with mcp7.

It localises to the nucleus. Required for proper homologous pairing and efficient cross-over and intragenic recombination during meiosis. Acts indirectly in a process facilitating homologous recombination. Acts during mid- to late-horse-tail period. This Schizosaccharomyces pombe (strain 972 / ATCC 24843) (Fission yeast) protein is Homologous-pairing protein 2 (meu13).